Reading from the N-terminus, the 526-residue chain is Beta,beta-carotene 15,15'-dioxygenase (526 aa).

Fe cation is bound by residues His-172, His-236, His-307, and His-512.

This sequence belongs to the carotenoid oxygenase family. Requires Fe(2+) as cofactor.

The protein localises to the cytoplasm. It is found in the cytosol. It catalyses the reaction all-trans-beta-carotene + O2 = 2 all-trans-retinal. The protein operates within cofactor metabolism; retinol metabolism. Its function is as follows. Symmetrically cleaves beta-carotene into two molecules of retinal using a dioxygenase mechanism. This chain is Beta,beta-carotene 15,15'-dioxygenase, found in Gallus gallus (Chicken).